The primary structure comprises 268 residues: Undecaprenyl-diphosphatase (268 aa).

6 helical membrane passes run 39-59 (SETFNIFIQLGAVLAVCLIYK), 75-95 (LPYFLKLSVAFIITSILGLWV), 106-126 (LGPVIIAIFGGAFWIYFTEKV), 179-199 (TEFAFLLGIPTMFAASLFAWI), 214-234 (LTLATGFCVSAVVAFISVKWL), and 243-263 (FIPFVWYRVGLGFFLIALVAL).

This sequence belongs to the UppP family.

Its subcellular location is the cell inner membrane. The enzyme catalyses di-trans,octa-cis-undecaprenyl diphosphate + H2O = di-trans,octa-cis-undecaprenyl phosphate + phosphate + H(+). Catalyzes the dephosphorylation of undecaprenyl diphosphate (UPP). Confers resistance to bacitracin. This chain is Undecaprenyl-diphosphatase, found in Methylacidiphilum infernorum (isolate V4) (Methylokorus infernorum (strain V4)).